Reading from the N-terminus, the 721-residue chain is mRNA (2'-O-methyladenosine-N(6)-)-methyltransferase (721 aa).

Composition is skewed to polar residues over residues 1-10 and 19-36; these read MTSENHTTIK and PTGS…TSKP. The interval 1–37 is disordered; sequence MTSENHTTIKADSALVMSPTGSTSQAAPFSPSTSKPI. Residues 43-77 enclose the WW domain; that stretch reads ELIQAGWSKCWSKRENRPYYFNRFTNQSLWEMPVL. Residues 93–170 form a disordered region; that stretch reads PASGEANADA…KQGQASTPAP (78 aa). Over residues 132–148 the composition is skewed to low complexity; it reads IPATPTTPTVPISPSTP. 2 residues coordinate substrate: Arg-239 and Arg-269. 558 to 561 contributes to the S-adenosyl-L-methionine binding site; the sequence is NPPF. Substrate contacts are provided by residues Glu-563 and 593-597; that span reads WRDPP. Residue 619 to 621 coordinates S-adenosyl-L-methionine; that stretch reads FEH. Residues 675-686 are compositionally biased toward low complexity; sequence SGRSLPSPGPSS. Positions 675–721 are disordered; that stretch reads SGRSLPSPGPSSTNTGEKDSKPAPERTAPSQDNSSPVDKTAQDTTNT. A compositionally biased stretch (polar residues) spans 702–721; that stretch reads APSQDNSSPVDKTAQDTTNT.

This sequence belongs to the CAPAM family.

It localises to the nucleus. It catalyses the reaction a 5'-end (N(7)-methyl 5'-triphosphoguanosine)-(2'-O-methyladenosine) in mRNA + S-adenosyl-L-methionine = a 5'-end (N(7)-methyl 5'-triphosphoguanosine)-(N(6),2'-O-dimethyladenosine) in mRNA + S-adenosyl-L-homocysteine + H(+). With respect to regulation, cap-specific adenosine methyltransferase activity is inhibited by zinc. Functionally, cap-specific adenosine methyltransferase that catalyzes formation of N(6),2'-O-dimethyladenosine cap (m6A(m)) by methylating the adenosine at the second transcribed position of capped mRNAs. The sequence is that of mRNA (2'-O-methyladenosine-N(6)-)-methyltransferase (pcif1) from Danio rerio (Zebrafish).